We begin with the raw amino-acid sequence, 507 residues long: MMKHGKGEDVFKYIEKTNEKNLYRINKGLVPGMNVEGNMYVNEKLKLLIDEEIKMYQLNKSSTFLPAVIQIANVSTLPGIVKASIALPDVHAGYGFSIGNVAAFDMNNEKAVISPGGVGFDINCGVRLIRTNLFYNDIKDKQEELAQLLFNHIPVGVGSQGFILCNQNNLDDALSLGMDWSVKEGYSWIEDKLNCEDNGRSLYANSDYVSVRAKKRGITQMGTLGAGNHYAEIQIVDEIYDKKSAKLMGIEKKNQVCIMIHSGSRGLGHQIATDALIEMEKVMSKYKINVIDKQLACTPIHSPEGQNYLKAMGAACNFAWINRSSMTFLARQAFSKVFNQSPDDLDMHVIYDVSHNIAKIEEHFINGKVQNLLVHRKGSTRAFPPFHPLVPLDYQYCGQPILIGGTMGTYSYVLTGTEKAMENTFGSTCHGAGRALSRNKSRNSLSYSDVLSNLKEKNISIRVASPKLIMEEAPESYKNVSEVVQTCHDSGISNKAFRLRPVAVIKG.

Mn(2+)-binding residues include aspartate 121, cysteine 124, histidine 229, histidine 261, and histidine 355. 228–232 contacts GMP; sequence NHYAE. GMP contacts are provided by residues 355 to 356, 404 to 407, serine 411, 430 to 433, and lysine 506; these read HN, GGTM, and HGAG. Histidine 430 (GMP-histidine intermediate) is an active-site residue.

The protein belongs to the RtcB family. As to quaternary structure, catalytic component of the tRNA-splicing ligase complex. Mn(2+) is required as a cofactor.

The enzyme catalyses a 3'-end 3'-phospho-ribonucleotide-RNA + a 5'-end dephospho-ribonucleoside-RNA + GTP = a ribonucleotidyl-ribonucleotide-RNA + GMP + diphosphate. It carries out the reaction a 3'-end 2',3'-cyclophospho-ribonucleotide-RNA + a 5'-end dephospho-ribonucleoside-RNA + GTP + H2O = a ribonucleotidyl-ribonucleotide-RNA + GMP + diphosphate + H(+). Functionally, catalytic subunit of the tRNA-splicing ligase complex that acts by directly joining spliced tRNA halves to mature-sized tRNAs by incorporating the precursor-derived splice junction phosphate into the mature tRNA as a canonical 3',5'-phosphodiester. May act as an RNA ligase with broad substrate specificity, and may function toward other RNAs. The polypeptide is RNA-splicing ligase RtcB homolog (Plasmodium yoelii yoelii).